Consider the following 196-residue polypeptide: Probable malonic semialdehyde reductase RutE (196 aa).

This sequence belongs to the nitroreductase family. HadB/RutE subfamily. FMN serves as cofactor.

It carries out the reaction 3-hydroxypropanoate + NADP(+) = 3-oxopropanoate + NADPH + H(+). Functionally, may reduce toxic product malonic semialdehyde to 3-hydroxypropionic acid, which is excreted. This Yersinia enterocolitica serotype O:8 / biotype 1B (strain NCTC 13174 / 8081) protein is Probable malonic semialdehyde reductase RutE.